A 233-amino-acid chain; its full sequence is MTSLPSSIFQGGLGDQPQSGLVPKVVEQTTRGERAYDIFSRLLKERIVFIGTPINDQIANLTVAQLLYLESEGSSQPINIYINSPGGVIYSGLGVYDTMQYVEAPISTTCVGLAASMGSVLLAGGEDGQRACLPNSRVMMHQPMGGTEGQASDIEIQAKEMAWLKKRLYQILSFHTGKDIDQIEEDADRNHWLSAEEAQEYGLVDQVMNEGNLDALKSIHANGEASDADSDEE.

Ser116 acts as the Nucleophile in catalysis. Residue His141 is part of the active site.

Belongs to the peptidase S14 family. As to quaternary structure, fourteen ClpP subunits assemble into 2 heptameric rings which stack back to back to give a disk-like structure with a central cavity, resembling the structure of eukaryotic proteasomes.

It is found in the cytoplasm. It catalyses the reaction Hydrolysis of proteins to small peptides in the presence of ATP and magnesium. alpha-casein is the usual test substrate. In the absence of ATP, only oligopeptides shorter than five residues are hydrolyzed (such as succinyl-Leu-Tyr-|-NHMec, and Leu-Tyr-Leu-|-Tyr-Trp, in which cleavage of the -Tyr-|-Leu- and -Tyr-|-Trp bonds also occurs).. Functionally, cleaves peptides in various proteins in a process that requires ATP hydrolysis. Has a chymotrypsin-like activity. Plays a major role in the degradation of misfolded proteins. The protein is ATP-dependent Clp protease proteolytic subunit 1 of Salinibacter ruber (strain DSM 13855 / M31).